A 287-amino-acid polypeptide reads, in one-letter code: Mitochondrial dicarboxylate carrier (287 aa).

Solcar repeat units lie at residues 8-88 (SRWY…VRDR), 101-188 (EKVL…AKQL), and 197-280 (DNIF…LRKN). 6 helical membrane-spanning segments follow: residues 10–30 (WYFGGLASCGAACCTHPLDLL), 63–82 (GLSASLCRQMTYSLTRFAIY), 103–123 (VLLGSVSGLAGGFVGTPADLV), 163–182 (GATMASSRGALVTVGQLSCY), 203–223 (FVASFIAGGCATFLCQPLDVL), and 255–275 (GLVPAGIRLIPHTVLTFVFLE).

The protein belongs to the mitochondrial carrier (TC 2.A.29) family. In terms of tissue distribution, present in high amounts in liver and kidney, and at lower levels in all the other tissues analyzed.

The protein localises to the mitochondrion inner membrane. The catalysed reaction is (S)-malate(in) + phosphate(out) = (S)-malate(out) + phosphate(in). The enzyme catalyses malonate(out) + (S)-malate(in) = malonate(in) + (S)-malate(out). It catalyses the reaction (S)-malate(in) + succinate(out) = (S)-malate(out) + succinate(in). It carries out the reaction (S)-malate(in) + sulfate(out) = (S)-malate(out) + sulfate(in). The catalysed reaction is malonate(out) + phosphate(in) = malonate(in) + phosphate(out). The enzyme catalyses succinate(out) + phosphate(in) = succinate(in) + phosphate(out). It catalyses the reaction sulfate(out) + phosphate(in) = sulfate(in) + phosphate(out). It carries out the reaction malonate(out) + succinate(in) = malonate(in) + succinate(out). Its function is as follows. Catalyzes the electroneutral exchange or flux of physiologically important metabolites such as dicarboxylates (malonate, malate, succinate), inorganic sulfur-containing anions, and phosphate, across mitochondrial inner membrane. Plays an important role in gluconeogenesis, fatty acid metabolism, urea synthesis, and sulfur metabolism, particularly in liver, by supplying the substrates for the different metabolic processes. Regulates fatty acid release from adipocytes, and contributes to systemic insulin sensitivity. In Homo sapiens (Human), this protein is Mitochondrial dicarboxylate carrier (SLC25A10).